The primary structure comprises 74 residues: uncharacterized protein (74 aa).

A helical membrane pass occupies residues 8–30 (LAAAVSSSAASAGVSRIAASAMA).

The protein localises to the mitochondrion outer membrane. This is an uncharacterized protein from Saccharomyces cerevisiae (strain ATCC 204508 / S288c) (Baker's yeast).